The sequence spans 283 residues: Zinc finger protein 691 (283 aa).

Basic and acidic residues predominate over residues 1–41 (MGSEKEQRPEAHLPEEGEGAKPWRVDGSKDSQITPREDHGQ). Residues 1 to 68 (MGSEKEQRPE…KVTAQAGGPG (68 aa)) are disordered. Ser-43 is modified (phosphoserine). Lys-81 is covalently cross-linked (Glycyl lysine isopeptide (Lys-Gly) (interchain with G-Cter in SUMO2)). 7 consecutive C2H2-type zinc fingers follow at residues 83-105 (FICA…QRIH), 111-133 (YKCS…ERIH), 139-161 (YQCA…QQDH), 167-189 (YRCD…HRTH), 195-217 (YICC…HRTH), 223-245 (YECT…QRTH), and 251-273 (YRCT…QKTH).

It belongs to the krueppel C2H2-type zinc-finger protein family.

It is found in the nucleus. In terms of biological role, may be involved in transcriptional regulation. The polypeptide is Zinc finger protein 691 (Znf691) (Mus musculus (Mouse)).